The primary structure comprises 57 residues: Putative secreted protein ML2569.1 (57 aa).

Positions 1-32 (MSRIVAPAAASVVVGLLLGAATIFGMTLMVQQ) are cleaved as a signal peptide. The disordered stretch occupies residues 34 to 57 (TKPPLPGGDPQSSVLNRVEYGNRT).

The protein is Putative secreted protein ML2569.1 of Mycobacterium leprae (strain TN).